A 357-amino-acid chain; its full sequence is GDP-mannose transporter 2 (357 aa).

At Met-1–Ala-43 the chain is on the cytoplasmic side. A helical transmembrane segment spans residues Ala-44–Val-64. The Lumenal portion of the chain corresponds to Ser-65–Ser-68. Residues Trp-69–Val-89 traverse the membrane as a helical segment. Topologically, residues Cys-90–Ala-107 are cytoplasmic. A helical transmembrane segment spans residues Gln-108–Leu-128. Residue Gln-129 is a topological domain, lumenal. The helical transmembrane segment at Phe-130–Gly-150 threads the bilayer. Over Glu-151–Pro-161 the chain is Cytoplasmic. The chain crosses the membrane as a helical span at residues Leu-162–Ile-182. The Lumenal segment spans residues Gln-183–Ser-196. A helical membrane pass occupies residues Ala-197–Phe-217. The Cytoplasmic portion of the chain corresponds to Ser-218–Asp-238. Residues Val-239–Glu-259 form a helical membrane-spanning segment. At Asp-260 to Ser-277 the chain is on the lumenal side. Residues Leu-278–Trp-298 traverse the membrane as a helical segment. Topologically, residues Cys-299–Thr-306 are cytoplasmic. The helical transmembrane segment at Thr-307–Phe-327 threads the bilayer. The Lumenal segment spans residues Ala-328 to Thr-332. The chain crosses the membrane as a helical span at residues Phe-333–Ala-352. At Lys-353–Ala-357 the chain is on the cytoplasmic side.

The protein belongs to the TPT transporter family. SLC35D subfamily. In terms of assembly, homooligomer.

The protein localises to the golgi apparatus membrane. It is found in the cytoplasmic vesicle membrane. The protein resides in the endoplasmic reticulum membrane. In terms of biological role, involved in the import of GDP-mannose from the cytoplasm into the Golgi lumen. This Emericella nidulans (strain FGSC A4 / ATCC 38163 / CBS 112.46 / NRRL 194 / M139) (Aspergillus nidulans) protein is GDP-mannose transporter 2 (gmt2).